The sequence spans 376 residues: Histidinol-phosphate aminotransferase (376 aa).

The residue at position 230 (Lys-230) is an N6-(pyridoxal phosphate)lysine.

The protein belongs to the class-II pyridoxal-phosphate-dependent aminotransferase family. Histidinol-phosphate aminotransferase subfamily. In terms of assembly, homodimer. It depends on pyridoxal 5'-phosphate as a cofactor.

It carries out the reaction L-histidinol phosphate + 2-oxoglutarate = 3-(imidazol-4-yl)-2-oxopropyl phosphate + L-glutamate. Its pathway is amino-acid biosynthesis; L-histidine biosynthesis; L-histidine from 5-phospho-alpha-D-ribose 1-diphosphate: step 7/9. This is Histidinol-phosphate aminotransferase from Trichodesmium erythraeum (strain IMS101).